The following is a 147-amino-acid chain: Hemoglobin subunit deltaH (147 aa).

In terms of domain architecture, Globin spans 3–147 (RLTDSEKAEV…MANALAHKYH (145 aa)). Heme b contacts are provided by histidine 64 and histidine 93.

It belongs to the globin family. In terms of assembly, heterotetramer of two delta chains and two alpha chains. Red blood cells.

This chain is Hemoglobin subunit deltaH, found in Procavia capensis (Rock hyrax).